We begin with the raw amino-acid sequence, 207 residues long: Thiamine-phosphate synthase (207 aa).

4-amino-2-methyl-5-(diphosphooxymethyl)pyrimidine is bound by residues 36-40 (QLRMK) and Asn68. Asp69 and Asp88 together coordinate Mg(2+). Ser106 is a binding site for 4-amino-2-methyl-5-(diphosphooxymethyl)pyrimidine. Residue 132 to 134 (TNT) coordinates 2-[(2R,5Z)-2-carboxy-4-methylthiazol-5(2H)-ylidene]ethyl phosphate. Lys135 lines the 4-amino-2-methyl-5-(diphosphooxymethyl)pyrimidine pocket. Residues Gly162 and 182-183 (VS) contribute to the 2-[(2R,5Z)-2-carboxy-4-methylthiazol-5(2H)-ylidene]ethyl phosphate site.

This sequence belongs to the thiamine-phosphate synthase family. Mg(2+) serves as cofactor.

It catalyses the reaction 2-[(2R,5Z)-2-carboxy-4-methylthiazol-5(2H)-ylidene]ethyl phosphate + 4-amino-2-methyl-5-(diphosphooxymethyl)pyrimidine + 2 H(+) = thiamine phosphate + CO2 + diphosphate. The catalysed reaction is 2-(2-carboxy-4-methylthiazol-5-yl)ethyl phosphate + 4-amino-2-methyl-5-(diphosphooxymethyl)pyrimidine + 2 H(+) = thiamine phosphate + CO2 + diphosphate. It carries out the reaction 4-methyl-5-(2-phosphooxyethyl)-thiazole + 4-amino-2-methyl-5-(diphosphooxymethyl)pyrimidine + H(+) = thiamine phosphate + diphosphate. It participates in cofactor biosynthesis; thiamine diphosphate biosynthesis; thiamine phosphate from 4-amino-2-methyl-5-diphosphomethylpyrimidine and 4-methyl-5-(2-phosphoethyl)-thiazole: step 1/1. Functionally, condenses 4-methyl-5-(beta-hydroxyethyl)thiazole monophosphate (THZ-P) and 2-methyl-4-amino-5-hydroxymethyl pyrimidine pyrophosphate (HMP-PP) to form thiamine monophosphate (TMP). The protein is Thiamine-phosphate synthase of Methanococcus maripaludis (strain C5 / ATCC BAA-1333).